The primary structure comprises 95 residues: Large ribosomal subunit protein bL28 (95 aa).

The protein belongs to the bacterial ribosomal protein bL28 family.

The chain is Large ribosomal subunit protein bL28 from Orientia tsutsugamushi (strain Ikeda) (Rickettsia tsutsugamushi).